We begin with the raw amino-acid sequence, 370 residues long: Cap-specific mRNA (nucleoside-2'-O-)-methyltransferase 1 (370 aa).

The 208-residue stretch at 87–294 folds into the RrmJ-type SAM-dependent 2'-O-MTase domain; sequence AFRNRAGHKL…ERYLVCIGFI (208 aa). Positions 130 and 207 each coordinate S-adenosyl-L-methionine. The active-site Proton acceptor is the lysine 248.

Component of a complex composed of CBF5, GAR1, NHP2, MTR1, NOP10 and Tb11.01.8210.

It is found in the nucleus. The catalysed reaction is a 5'-end (N(7)-methyl 5'-triphosphoguanosine)-ribonucleoside in mRNA + S-adenosyl-L-methionine = a 5'-end (N(7)-methyl 5'-triphosphoguanosine)-(2'-O-methyl-ribonucleoside) in mRNA + S-adenosyl-L-homocysteine + H(+). Functionally, S-adenosyl-L-methionine-dependent methyltransferase that mediates RNA cap1 2'-O-ribose methylation to the 5'-cap structure of spliced leader and U1 small nuclear RNAs. Methylates the ribose of the first nucleotide of a m(7)GpppG-capped RNA to produce m(7)GpppNmp (cap1). Cap1 modification is linked to higher levels of translation. Recognizes a guanosine cap on RNA independent of its N(7) methylation status. In Trypanosoma brucei brucei (strain 927/4 GUTat10.1), this protein is Cap-specific mRNA (nucleoside-2'-O-)-methyltransferase 1 (MTR1).